The chain runs to 237 residues: 1-(5-phosphoribosyl)-5-[(5-phosphoribosylamino)methylideneamino] imidazole-4-carboxamide isomerase (237 aa).

D8 acts as the Proton acceptor in catalysis. The Proton donor role is filled by D129.

The protein belongs to the HisA/HisF family.

Its subcellular location is the cytoplasm. The enzyme catalyses 1-(5-phospho-beta-D-ribosyl)-5-[(5-phospho-beta-D-ribosylamino)methylideneamino]imidazole-4-carboxamide = 5-[(5-phospho-1-deoxy-D-ribulos-1-ylimino)methylamino]-1-(5-phospho-beta-D-ribosyl)imidazole-4-carboxamide. It participates in amino-acid biosynthesis; L-histidine biosynthesis; L-histidine from 5-phospho-alpha-D-ribose 1-diphosphate: step 4/9. The chain is 1-(5-phosphoribosyl)-5-[(5-phosphoribosylamino)methylideneamino] imidazole-4-carboxamide isomerase from Clostridium botulinum (strain Alaska E43 / Type E3).